Reading from the N-terminus, the 279-residue chain is Urease accessory protein UreD (279 aa).

It belongs to the UreD family. In terms of assembly, ureD, UreF and UreG form a complex that acts as a GTP-hydrolysis-dependent molecular chaperone, activating the urease apoprotein by helping to assemble the nickel containing metallocenter of UreC. The UreE protein probably delivers the nickel.

The protein resides in the cytoplasm. In terms of biological role, required for maturation of urease via the functional incorporation of the urease nickel metallocenter. The sequence is that of Urease accessory protein UreD from Nostoc sp. (strain PCC 7120 / SAG 25.82 / UTEX 2576).